The primary structure comprises 535 residues: Growth factor receptor-bound protein 7 (535 aa).

Positions methionine 1 to arginine 90 are disordered. The span at proline 21–glycine 37 shows a compositional bias: pro residues. Positions arginine 99–alanine 185 constitute a Ras-associating domain. Phosphotyrosine; by FAK1 occurs at positions 187 and 341. Positions phenylalanine 228–tyrosine 341 constitute a PH domain. A Phosphoserine modification is found at serine 364. In terms of domain architecture, SH2 spans tryptophan 434–cysteine 530.

It belongs to the GRB7/10/14 family. In terms of assembly, homodimer. Interacts (via SH2 domain) with EGFR, ERBB2, ERBB3 (when phosphorylated), ERBB4 (when phosphorylated), EPHB1, INSR, FGFR1, PDGFRA (tyrosine phosphorylated) and PDGFRB (tyrosine phosphorylated). Interacts with SHC1. Interacts with RND1. Interacts (when tyrosine phosphorylated) with FHL2 and HAX1. Interacts (via SH2 domain) with RET and PTK2/FAK1. Interacts (when not phosphorylated) with ELAVL1. In stressed cells, but not in normal cells, part of a complex that contains at least GRB7, PTK2/FAK1, STAU1, ELAVL1 and TIA1. Interacts (via SH2 domain) with KIT (phosphorylated). Interacts (via SH2 domain) with TEK/TIE2 (tyrosine phosphorylated). In terms of processing, phosphorylated on serine and threonine residues in response to activation of receptor kinases. Phosphorylated on tyrosine residues by TEK/TIE2. Phosphorylated on tyrosine residues by PTK2/FAK1, and possibly also other kinases. Phosphorylation is enhanced by activation of receptor kinases. Tyrosine phosphorylation is essential for activation of down-stream protein kinases. Phosphorylated on tyrosine residues in response to NTN1 signaling. Phosphorylation promotes stress granule disassembly during recovery after cellular stress.

The protein localises to the cytoplasm. It is found in the cell projection. The protein resides in the cell junction. It localises to the focal adhesion. Its subcellular location is the cell membrane. The protein localises to the cytoplasmic granule. Adapter protein that interacts with the cytoplasmic domain of numerous receptor kinases and modulates down-stream signaling. Promotes activation of down-stream protein kinases, including STAT3, AKT1, MAPK1 and/or MAPK3. Promotes activation of HRAS. Plays a role in signal transduction in response to EGF. Plays a role in the regulation of cell proliferation and cell migration. Plays a role in the assembly and stability of RNA stress granules. Binds to the 5'UTR of target mRNA molecules and represses translation of target mRNA species, when not phosphorylated. Phosphorylation impairs RNA binding and promotes stress granule disassembly during recovery after cellular stress. The protein is Growth factor receptor-bound protein 7 (Grb7) of Mus musculus (Mouse).